Here is a 142-residue protein sequence, read N- to C-terminus: Transcriptional regulator MraZ (142 aa).

2 SpoVT-AbrB domains span residues 5–47 (EYNH…PLGE) and 76–119 (ANEV…SKEK).

It belongs to the MraZ family. As to quaternary structure, forms oligomers.

It localises to the cytoplasm. Its subcellular location is the nucleoid. This chain is Transcriptional regulator MraZ, found in Clostridium acetobutylicum (strain ATCC 824 / DSM 792 / JCM 1419 / IAM 19013 / LMG 5710 / NBRC 13948 / NRRL B-527 / VKM B-1787 / 2291 / W).